The primary structure comprises 333 residues: MPVLMPSADVPTIDISPLFGTDPDAKAHVARQINEACRGSGFFYASHHGIDVRRLQDVVNEFHRTMTDQEKHDLAIHAYNENNSHVRNGYYMARPGRKTVESWCYLNPSFGEDHPMIKAGTPMHEVNVWPDEERHPDFRSFGEQYYREVFRLSKVLLLRGFALALGKPEEFFENEVTEEDTLSCRSLMIRYPYLDPYPEAAIKTGPDGTRLSFEDHLDVSMITVLFQTEVQNLQVETVDGWQSLPTSGENFLINCGTYLGYLTNDYFPAPNHRVKYVNAERLSLPFFLHAGQNSVMKPFHPEDTGDRKLNPAVTYGEYLQEGFHALIAKNVQT.

Isopenicillin N contacts are provided by arginine 87, tyrosine 91, and tyrosine 191. N-[(5S)-5-amino-5-carboxypentanoyl]-L-cysteinyl-D-valine contacts are provided by arginine 87, tyrosine 91, tyrosine 191, histidine 216, and aspartate 218. The region spanning 180 to 290 is the Fe2OG dioxygenase domain; sequence DTLSCRSLMI…RLSLPFFLHA (111 aa). Histidine 216, aspartate 218, and histidine 272 together coordinate Fe(2+). Arginine 281 contributes to the 2-oxoglutarate binding site. Residue serine 283 coordinates isopenicillin N. Residue serine 283 participates in N-[(5S)-5-amino-5-carboxypentanoyl]-L-cysteinyl-D-valine binding.

Belongs to the iron/ascorbate-dependent oxidoreductase family. It depends on Fe cation as a cofactor. The cofactor is L-ascorbate.

The catalysed reaction is N-[(5S)-5-amino-5-carboxypentanoyl]-L-cysteinyl-D-valine + O2 = isopenicillin N + 2 H2O. Its pathway is antibiotic biosynthesis; penicillin G biosynthesis; penicillin G from L-alpha-aminoadipate and L-cysteine and L-valine: step 2/3. In terms of biological role, removes, in the presence of oxygen, 4 hydrogen atoms from delta-L-(alpha-aminoadipyl)-L-cysteinyl-D-valine (ACV) to form the azetidinone and thiazolidine rings of isopenicillin. The chain is Isopenicillin N synthase (pcbC) from Streptomyces microflavus (Streptomyces lipmanii).